We begin with the raw amino-acid sequence, 852 residues long: Kinesin-like protein KIF18B (852 aa).

The Kinesin motor domain occupies 7–351 (TLQVVVRVRP…LKYADRAKEI (345 aa)). 109 to 116 (GATGAGKT) serves as a coordination point for ATP. A coiled-coil region spans residues 366-393 (ISQYATICQQLQAEVAALRKKLQVYEGG). Disordered regions lie at residues 390 to 424 (YEGGGQPPPQDLPGSPKSGPPPEHQPCTPELPAGP) and 437 to 485 (QVER…RLTL). A Phosphoserine modification is found at Ser404. Thr417 carries the phosphothreonine modification. Residues 451 to 461 (QSPEDEDEGPA) are compositionally biased toward acidic residues. A phosphoserine mark is found at Ser452, Ser480, and Ser558. Disordered stretches follow at residues 575 to 594 (IPVPSPLCPEPPGYTGPVTR) and 602 to 689 (GPLH…SPRV). Pro residues predominate over residues 577-588 (VPSPLCPEPPGY). The Nuclear localization signal motif lies at 624–632 (PMEKKRRRP). Phosphoserine occurs at positions 633 and 639. Positions 653-656 (SFLP) match the MAPRE1-binding motif. Ser662 carries the post-translational modification Phosphoserine. Over residues 664-673 (PDTQPSQGPS) the composition is skewed to polar residues. Thr674 carries the post-translational modification Phosphothreonine. Positions 711 to 736 (TPLALPTRDLNATFDLSEEPPSKPSF) are KIF2C-binding. The tract at residues 767–798 (MKGPKPTSSLPGTSACKKKRVASSSVSHGRSR) is disordered. 2 consecutive short sequence motifs (MAPRE1-binding) follow at residues 774–777 (SSLP) and 800–803 (ARLP). A Phosphoserine modification is found at Ser822.

It belongs to the TRAFAC class myosin-kinesin ATPase superfamily. Kinesin family. Interacts with MAPRE1; this interaction is required for efficient accumulation at microtubule plus ends. Interacts with KIF2C at microtubule tips; this interaction increases the affinity of both partners for microtubule plus ends and is required for robust microtubule depolymerization. KIF2C phosphorylation by AURKA or AURKB strongly reduces KIF18B-binding. As to expression, shows a prominent expression in the amygdala.

The protein localises to the nucleus. It localises to the cytoplasm. Its subcellular location is the cytoskeleton. In complex with KIF2C, constitutes the major microtubule plus-end depolymerizing activity in mitotic cells. Its major role may be to transport KIF2C and/or MAPRE1 along microtubules. The chain is Kinesin-like protein KIF18B (KIF18B) from Homo sapiens (Human).